A 164-amino-acid polypeptide reads, in one-letter code: Phosphopantetheine adenylyltransferase (164 aa).

Residue S9 coordinates substrate. Residues 9–10 and H17 each bind ATP; that span reads SF. Substrate contacts are provided by K41, V78, and R92. ATP-binding positions include 93–95, E103, and 128–134; these read GLR and VRTITAT.

Belongs to the bacterial CoaD family. Homohexamer. Mg(2+) is required as a cofactor.

The protein localises to the cytoplasm. It catalyses the reaction (R)-4'-phosphopantetheine + ATP + H(+) = 3'-dephospho-CoA + diphosphate. The protein operates within cofactor biosynthesis; coenzyme A biosynthesis; CoA from (R)-pantothenate: step 4/5. Reversibly transfers an adenylyl group from ATP to 4'-phosphopantetheine, yielding dephospho-CoA (dPCoA) and pyrophosphate. This chain is Phosphopantetheine adenylyltransferase, found in Brucella suis (strain ATCC 23445 / NCTC 10510).